The following is a 111-amino-acid chain: Nucleoid-associated protein SynRCC307_0025 (111 aa).

This sequence belongs to the YbaB/EbfC family. In terms of assembly, homodimer.

Its subcellular location is the cytoplasm. It localises to the nucleoid. In terms of biological role, binds to DNA and alters its conformation. May be involved in regulation of gene expression, nucleoid organization and DNA protection. This chain is Nucleoid-associated protein SynRCC307_0025, found in Synechococcus sp. (strain RCC307).